Here is a 195-residue protein sequence, read N- to C-terminus: Dephospho-CoA kinase (195 aa).

One can recognise a DPCK domain in the interval 4–195 (IIGLTGGIAS…EQILDALQRL (192 aa)). ATP is bound at residue 12–17 (ASGKST).

Belongs to the CoaE family.

It is found in the cytoplasm. The enzyme catalyses 3'-dephospho-CoA + ATP = ADP + CoA + H(+). It participates in cofactor biosynthesis; coenzyme A biosynthesis; CoA from (R)-pantothenate: step 5/5. Catalyzes the phosphorylation of the 3'-hydroxyl group of dephosphocoenzyme A to form coenzyme A. This is Dephospho-CoA kinase from Streptococcus agalactiae serotype Ia (strain ATCC 27591 / A909 / CDC SS700).